The following is a 217-amino-acid chain: Small ribosomal subunit protein uS3 (217 aa).

The KH type-2 domain maps to 38–106; it reads IRKFVQKELA…QVHINIIEIK (69 aa).

It belongs to the universal ribosomal protein uS3 family. Part of the 30S ribosomal subunit. Forms a tight complex with proteins S10 and S14.

In terms of biological role, binds the lower part of the 30S subunit head. Binds mRNA in the 70S ribosome, positioning it for translation. The chain is Small ribosomal subunit protein uS3 from Streptococcus sanguinis (strain SK36).